Reading from the N-terminus, the 431-residue chain is MKVSMEKIENNVVKLEVTVEAKKFNEAMKKSYAKNVKKFNVPGFRKGKAPMSIIKRYYGETVFYEDAINICCDDTYPKALEEKEIKPVDYPQIDIVEIGEGKDFVYTAQVTVMPEVELGEYKGLEAKKVSYDVKDEDVENTLKEMQQRNARIQTKEDEEAIEKGNIAVIDFKGYVDEVPFEGGEGYDYSLEIGSGTFIDNFEDQLIGAKKGEEKEVKVKFPEEYGSEELNGKEAKFQVTIKEIKVKELPAIDDEFVKEVSEFDTLDELKEDIKAKIKEGNDKRAKAEYEETVINLACENAKVDIPEVMVENEINNMLKDLEMKLRYQGIDLETYYQYTNSTEEKVREYMKEAATKRVKTDLVLAEVAKAEKLEATDEEIMDRAKEMAKQYGSGELEKTAKLLADSQNALLKADVINEKVVKLIVDNSKEIE.

The PPIase FKBP-type domain maps to 164-249 (GNIAVIDFKG…IKEIKVKELP (86 aa)).

The protein belongs to the FKBP-type PPIase family. Tig subfamily.

The protein localises to the cytoplasm. It carries out the reaction [protein]-peptidylproline (omega=180) = [protein]-peptidylproline (omega=0). Functionally, involved in protein export. Acts as a chaperone by maintaining the newly synthesized protein in an open conformation. Functions as a peptidyl-prolyl cis-trans isomerase. The polypeptide is Trigger factor (Clostridium tetani (strain Massachusetts / E88)).